A 438-amino-acid polypeptide reads, in one-letter code: 3-phosphoshikimate 1-carboxyvinyltransferase (438 aa).

K21 serves as a coordination point for phosphoenolpyruvate. Residues S22 and R26 each contribute to the 3-phosphoshikimate site. The interval 93 to 96 is phosphoenolpyruvate; that stretch reads NSGT. Residues G95, T96, and R123 each coordinate phosphoenolpyruvate. Residues S167, A168, Q169, D315, and K342 each coordinate 3-phosphoshikimate. Q169 contacts phosphoenolpyruvate. D315 serves as the catalytic Proton acceptor. 2 residues coordinate phosphoenolpyruvate: R346 and R387.

Belongs to the EPSP synthase family. As to quaternary structure, homodimer or homotetramer.

The protein localises to the cytoplasm. The enzyme catalyses 3-phosphoshikimate + phosphoenolpyruvate = 5-O-(1-carboxyvinyl)-3-phosphoshikimate + phosphate. The protein operates within metabolic intermediate biosynthesis; chorismate biosynthesis; chorismate from D-erythrose 4-phosphate and phosphoenolpyruvate: step 6/7. Its function is as follows. Catalyzes the transfer of the enolpyruvyl moiety of phosphoenolpyruvate (PEP) to the 5-hydroxyl of shikimate-3-phosphate (S3P) to produce enolpyruvyl shikimate-3-phosphate and inorganic phosphate. The sequence is that of 3-phosphoshikimate 1-carboxyvinyltransferase from Coxiella burnetii (strain RSA 493 / Nine Mile phase I).